Consider the following 273-residue polypeptide: Urease accessory protein UreD (273 aa).

This sequence belongs to the UreD family. In terms of assembly, ureD, UreF and UreG form a complex that acts as a GTP-hydrolysis-dependent molecular chaperone, activating the urease apoprotein by helping to assemble the nickel containing metallocenter of UreC. The UreE protein probably delivers the nickel.

It is found in the cytoplasm. Functionally, required for maturation of urease via the functional incorporation of the urease nickel metallocenter. This chain is Urease accessory protein UreD, found in Rhizobium johnstonii (strain DSM 114642 / LMG 32736 / 3841) (Rhizobium leguminosarum bv. viciae).